The chain runs to 229 residues: Large ribosomal subunit protein uL1 (229 aa).

It belongs to the universal ribosomal protein uL1 family. As to quaternary structure, part of the 50S ribosomal subunit.

Its function is as follows. Binds directly to 23S rRNA. The L1 stalk is quite mobile in the ribosome, and is involved in E site tRNA release. In terms of biological role, protein L1 is also a translational repressor protein, it controls the translation of the L11 operon by binding to its mRNA. This is Large ribosomal subunit protein uL1 from Streptococcus gordonii (strain Challis / ATCC 35105 / BCRC 15272 / CH1 / DL1 / V288).